A 469-amino-acid polypeptide reads, in one-letter code: Probable NADPH:adrenodoxin oxidoreductase, mitochondrial (469 aa).

A mitochondrion-targeting transit peptide spans 1–38 (MLSRFIKRTYSTQTSSPVVGIIGSGPAAFYTAHRLLRN). 4 residues coordinate FAD: Ala27, Glu48, Leu56, and Val92. NADP(+)-binding positions include 164-167 (HGNV), 208-209 (RR), and Glu220. FAD is bound by residues Trp375 and 382–384 (GVI). Gly382 is a binding site for NADP(+).

The protein belongs to the ferredoxin--NADP reductase type 1 family. The cofactor is FAD.

Its subcellular location is the mitochondrion inner membrane. It catalyses the reaction 2 reduced [adrenodoxin] + NADP(+) + H(+) = 2 oxidized [adrenodoxin] + NADPH. In terms of biological role, adrenodoxin reductase transfers electrons from NADPH to adrenodoxin, which is involved in heme A biosynthesis and in iron-sulfur cluster assembly. Involved in the electron transfer to heme A synthase etp1(cd), a heme protein that catalyzes the conversion of heme O to heme A. Required for the de novo synthesis of Fe-S clusters on iron sulfur cluster assembly protein isu1. Involved in electron delivery for Fe-S cluster synthesis. Essential for coenzyme Q biosynthesis. May be involved in the electron transfer required for the hydroxylation reaction performed by coq6. May play a role in cellular and mitochondrial iron homeostasis. The sequence is that of Probable NADPH:adrenodoxin oxidoreductase, mitochondrial (arh1) from Schizosaccharomyces pombe (strain 972 / ATCC 24843) (Fission yeast).